Reading from the N-terminus, the 202-residue chain is Putative 3-methyladenine DNA glycosylase (202 aa).

It belongs to the DNA glycosylase MPG family.

This Clostridium botulinum (strain Alaska E43 / Type E3) protein is Putative 3-methyladenine DNA glycosylase.